The following is a 434-amino-acid chain: ATP-dependent protease ATPase subunit HslU (434 aa).

Residues Ile18, 60 to 65 (GVGKTE), Asp247, Glu312, and Arg384 each bind ATP.

This sequence belongs to the ClpX chaperone family. HslU subfamily. As to quaternary structure, a double ring-shaped homohexamer of HslV is capped on each side by a ring-shaped HslU homohexamer. The assembly of the HslU/HslV complex is dependent on binding of ATP.

It localises to the cytoplasm. In terms of biological role, ATPase subunit of a proteasome-like degradation complex; this subunit has chaperone activity. The binding of ATP and its subsequent hydrolysis by HslU are essential for unfolding of protein substrates subsequently hydrolyzed by HslV. HslU recognizes the N-terminal part of its protein substrates and unfolds these before they are guided to HslV for hydrolysis. This is ATP-dependent protease ATPase subunit HslU from Brucella melitensis biotype 2 (strain ATCC 23457).